A 324-amino-acid polypeptide reads, in one-letter code: THUMP domain-containing protein 1 homolog (324 aa).

Disordered regions lie at residues 1–24 (MEPA…KKYF) and 67–104 (SEKP…DDDD). The segment covering 68-80 (EKPENEPEKKQPE) has biased composition (basic and acidic residues). Thr99 bears the Phosphothreonine mark. At Ser100 the chain carries Phosphoserine. The 107-residue stretch at 154-260 (DIATTGKSMS…RGWCLLSVID (107 aa)) folds into the THUMP domain. Residues 275–324 (NPSDKKSSGEGDSKSETSEVANGNDKEQAESSEESKSNDDENKDSTENDK) are disordered. Basic and acidic residues-rich tracts occupy residues 277–291 (SDKK…KSET) and 298–324 (NDKE…ENDK).

Belongs to the THUMPD1 family.

This chain is THUMP domain-containing protein 1 homolog, found in Drosophila melanogaster (Fruit fly).